Here is a 238-residue protein sequence, read N- to C-terminus: Ribosomal RNA small subunit methyltransferase G (238 aa).

S-adenosyl-L-methionine contacts are provided by residues Gly-80, 131–132 (AE), and Arg-148.

It belongs to the methyltransferase superfamily. RNA methyltransferase RsmG family.

The protein resides in the cytoplasm. Its function is as follows. Specifically methylates the N7 position of a guanine in 16S rRNA. This Thermotoga maritima (strain ATCC 43589 / DSM 3109 / JCM 10099 / NBRC 100826 / MSB8) protein is Ribosomal RNA small subunit methyltransferase G.